The primary structure comprises 154 residues: D-aminoacyl-tRNA deacylase (154 aa).

Positions 142 to 143 (GP) match the Gly-cisPro motif, important for rejection of L-amino acids motif.

The protein belongs to the DTD family. As to quaternary structure, homodimer.

The protein localises to the cytoplasm. The enzyme catalyses glycyl-tRNA(Ala) + H2O = tRNA(Ala) + glycine + H(+). It carries out the reaction a D-aminoacyl-tRNA + H2O = a tRNA + a D-alpha-amino acid + H(+). Functionally, an aminoacyl-tRNA editing enzyme that deacylates mischarged D-aminoacyl-tRNAs. Also deacylates mischarged glycyl-tRNA(Ala), protecting cells against glycine mischarging by AlaRS. Acts via tRNA-based rather than protein-based catalysis; rejects L-amino acids rather than detecting D-amino acids in the active site. By recycling D-aminoacyl-tRNA to D-amino acids and free tRNA molecules, this enzyme counteracts the toxicity associated with the formation of D-aminoacyl-tRNA entities in vivo and helps enforce protein L-homochirality. The protein is D-aminoacyl-tRNA deacylase of Polaromonas naphthalenivorans (strain CJ2).